The primary structure comprises 305 residues: Putative cuticle collagen 90 (305 aa).

2 disordered regions span residues 95–117 (AGPP…GDLG) and 146–305 (PPGQ…AKRH). Triple-helical region regions lie at residues 96–125 (GPPG…SGIS), 142–204 (GPAG…PGTA), 208–252 (GAVG…NGRD), and 256–270 (GQPG…VGKD). Low complexity predominate over residues 150–162 (QGPVGPQGFPGVV). The segment covering 278–288 (ARRDSKTESVH) has biased composition (basic and acidic residues).

This sequence belongs to the cuticular collagen family. Collagen polypeptide chains are complexed within the cuticle by disulfide bonds and other types of covalent cross-links.

Its function is as follows. Nematode cuticles are composed largely of collagen-like proteins. The cuticle functions both as an exoskeleton and as a barrier to protect the worm from its environment. The sequence is that of Putative cuticle collagen 90 (col-90) from Caenorhabditis elegans.